We begin with the raw amino-acid sequence, 372 residues long: NAD(P)H-quinone oxidoreductase subunit 1 (372 aa).

9 consecutive transmembrane segments (helical) span residues 27-47, 65-85, 97-117, 128-148, 176-196, 204-224, 249-269, 308-328, and 351-371; these read TIWL…GVLV, PEYI…KLVF, WLFT…YLIV, LGIG…GLLM, LALA…IDIV, ILGW…IAAL, YAGM…VLSS, GLGL…AILL, and VGLV…FAFG.

It belongs to the complex I subunit 1 family. NDH-1 is composed of at least 11 different subunits.

It is found in the cellular thylakoid membrane. It catalyses the reaction a plastoquinone + NADH + (n+1) H(+)(in) = a plastoquinol + NAD(+) + n H(+)(out). The catalysed reaction is a plastoquinone + NADPH + (n+1) H(+)(in) = a plastoquinol + NADP(+) + n H(+)(out). NDH-1 shuttles electrons from an unknown electron donor, via FMN and iron-sulfur (Fe-S) centers, to quinones in the respiratory and/or the photosynthetic chain. The immediate electron acceptor for the enzyme in this species is believed to be plastoquinone. Couples the redox reaction to proton translocation, and thus conserves the redox energy in a proton gradient. The polypeptide is NAD(P)H-quinone oxidoreductase subunit 1 (Acaryochloris marina (strain MBIC 11017)).